The sequence spans 227 residues: UPF0173 metal-dependent hydrolase BCE_4747 (227 aa).

Belongs to the UPF0173 family.

The polypeptide is UPF0173 metal-dependent hydrolase BCE_4747 (Bacillus cereus (strain ATCC 10987 / NRS 248)).